Here is a 415-residue protein sequence, read N- to C-terminus: Serine hydroxymethyltransferase 1 (415 aa).

(6S)-5,6,7,8-tetrahydrofolate contacts are provided by residues L122 and 126–128; that span reads GHL. An N6-(pyridoxal phosphate)lysine modification is found at K230.

The protein belongs to the SHMT family. As to quaternary structure, homodimer. It depends on pyridoxal 5'-phosphate as a cofactor.

It localises to the cytoplasm. It carries out the reaction (6R)-5,10-methylene-5,6,7,8-tetrahydrofolate + glycine + H2O = (6S)-5,6,7,8-tetrahydrofolate + L-serine. Its pathway is one-carbon metabolism; tetrahydrofolate interconversion. It functions in the pathway amino-acid biosynthesis; glycine biosynthesis; glycine from L-serine: step 1/1. In terms of biological role, catalyzes the reversible interconversion of serine and glycine with tetrahydrofolate (THF) serving as the one-carbon carrier. This reaction serves as the major source of one-carbon groups required for the biosynthesis of purines, thymidylate, methionine, and other important biomolecules. Also exhibits THF-independent aldolase activity toward beta-hydroxyamino acids, producing glycine and aldehydes, via a retro-aldol mechanism. The chain is Serine hydroxymethyltransferase 1 from Burkholderia mallei (strain ATCC 23344).